The following is a 77-amino-acid chain: Acyl carrier protein (77 aa).

Residues 2-77 (SNIEERVKKI…AAIDYVTANQ (76 aa)) enclose the Carrier domain. An O-(pantetheine 4'-phosphoryl)serine modification is found at Ser37.

It belongs to the acyl carrier protein (ACP) family. 4'-phosphopantetheine is transferred from CoA to a specific serine of apo-ACP by AcpS. This modification is essential for activity because fatty acids are bound in thioester linkage to the sulfhydryl of the prosthetic group.

It localises to the cytoplasm. Its pathway is lipid metabolism; fatty acid biosynthesis. Its function is as follows. Carrier of the growing fatty acid chain in fatty acid biosynthesis. In Colwellia psychrerythraea (strain 34H / ATCC BAA-681) (Vibrio psychroerythus), this protein is Acyl carrier protein.